Reading from the N-terminus, the 396-residue chain is DNA excision repair protein ERCC-8 (396 aa).

WD repeat units lie at residues 33–73, 88–129, 133–173, 177–216, 235–274, 281–321, and 325–363; these read NKDR…LYDL, CSIG…VWDT, QTAD…LCDL, SCSHILQGHRQEILAVSWSPRYDYILATASADSRVKLWDV, QAVESANTAHNGKVNGLCFTSDGLHLLTVGTDNRMRLWNS, LVNY…VYTV, and EQITMLKGHYKTVDCCVFQSNFQELYSGSRDCNILAWVP. Residues 371 to 396 form a disordered region; it reads DDDETTTKSQLNPAFEDAWSSSDEEG. Phosphoserine is present on residues Ser390, Ser391, and Ser392.

As to quaternary structure, part of the CSA complex (also named DCX(ERCC8) complex), a DCX E3 ubiquitin-protein ligase complex containing ERCC8, RBX1, DDB1 and CUL4A; the CSA complex interacts with RNA polymerase II; upon UV irradiation it interacts with the COP9 signalosome and preferentially with the hyperphosphorylated form of RNA polymerase II. Interacts with ERCC6/CSB (via CIM motif); promoting recruitment to lesion-stalled RNA polymerase II (Pol II). Interacts with KIAA1530/UVSSA. Interacts with a subunit of RNA polymerase II TFIIH.

The protein resides in the nucleus. The protein localises to the chromosome. It localises to the nucleus matrix. The protein operates within protein modification; protein ubiquitination. Functionally, substrate-recognition component of the CSA complex, a DCX (DDB1-CUL4-X-box) E3 ubiquitin-protein ligase complex, involved in transcription-coupled nucleotide excision repair (TC-NER), a process during which RNA polymerase II-blocking lesions are rapidly removed from the transcribed strand of active genes. Following recruitment to lesion-stalled RNA polymerase II (Pol II), the CSA complex mediates ubiquitination of Pol II subunit POLR2A/RPB1 at 'Lys-1268', a critical TC-NER checkpoint, governing RNA Pol II stability and initiating DNA damage excision by TFIIH recruitment. The CSA complex also promotes the ubiquitination and subsequent proteasomal degradation of ERCC6/CSB in a UV-dependent manner; ERCC6 degradation is essential for the recovery of RNA synthesis after transcription-coupled repair. Also plays a role in DNA double-strand breaks (DSSBs) repair by non-homologous end joining (NHEJ). The polypeptide is DNA excision repair protein ERCC-8 (Homo sapiens (Human)).